A 214-amino-acid polypeptide reads, in one-letter code: Probable DNA (cytosine-5)-methyltransferase (214 aa).

Cys62 is an active-site residue.

Belongs to the class I-like SAM-binding methyltransferase superfamily. C5-methyltransferase family. Probably requires another subunit for function.

It carries out the reaction a 2'-deoxycytidine in DNA + S-adenosyl-L-methionine = a 5-methyl-2'-deoxycytidine in DNA + S-adenosyl-L-homocysteine + H(+). Functionally, this is probably the methylase that recognizes and modifies 5'-CpG-3'. The polypeptide is Probable DNA (cytosine-5)-methyltransferase (Dryophytes versicolor (chameleon treefrog)).